A 167-amino-acid polypeptide reads, in one-letter code: Ribosome maturation factor RimM (167 aa).

One can recognise a PRC barrel domain in the interval 94–166 (DDRAWLHELE…YIHVPRFDEF (73 aa)).

Belongs to the RimM family. Binds ribosomal protein uS19.

The protein localises to the cytoplasm. In terms of biological role, an accessory protein needed during the final step in the assembly of 30S ribosomal subunit, possibly for assembly of the head region. Essential for efficient processing of 16S rRNA. May be needed both before and after RbfA during the maturation of 16S rRNA. It has affinity for free ribosomal 30S subunits but not for 70S ribosomes. This Chlorobium luteolum (strain DSM 273 / BCRC 81028 / 2530) (Pelodictyon luteolum) protein is Ribosome maturation factor RimM.